Consider the following 482-residue polypeptide: MKGLFLRIITALALLFWAIDMVFPWQFLRHTEENHYAAIQSRGALYVGTINNQISYFTNNDGERGFEYELAKAFADSLGVELEMKTFDNQEQLFDELDKHNIDLAAAHILYHPKNAERFQIGPAYHSASWQLAYRKNENRPKNLGNVKKDIYISNNLALEETLKELQKQYPQLTWKRNQTLTQEELLLQLAEGKIPYVIANSIDIAAMQQIKPELAIAFDITDEANVHWYLPNKSYHDLQTALLNFMNNAEETGLLDNLKEKYLGHISQFDYVDTRSYMNAIENTLPQYSPLFEKYQGELDWRLLAAVAYQESHWDPHATSPTGVRGIMMLTKNTAQHMKISDRTNPEQSIKAGSEYLHWLISQLPESIEKEEKIWFALVAYNIGLGHLIDARRLTQNLGGNPDNWLDVKKNLPLLAEKRYYSQLKYGYARGYEAYQYVENIRRYMNSIVNYHRVQENQIINDNASNESAVKNLEEIKENKD.

The N-terminal stretch at 1-13 is a signal peptide; the sequence is MKGLFLRIITALA. The tract at residues 14–267 is non-LT domain; sequence LLFWAIDMVF…NLKEKYLGHI (254 aa). An LT domain region spans residues 268 to 482; sequence SQFDYVDTRS…NLEEIKENKD (215 aa). Glu312 is a catalytic residue.

The protein in the N-terminal section; belongs to the bacterial solute-binding protein 3 family. This sequence in the C-terminal section; belongs to the transglycosylase Slt family.

It localises to the cell outer membrane. It catalyses the reaction Exolytic cleavage of the (1-&gt;4)-beta-glycosidic linkage between N-acetylmuramic acid (MurNAc) and N-acetylglucosamine (GlcNAc) residues in peptidoglycan, from either the reducing or the non-reducing ends of the peptidoglycan chains, with concomitant formation of a 1,6-anhydrobond in the MurNAc residue.. Its function is as follows. Murein-degrading enzyme that degrades murein glycan strands and insoluble, high-molecular weight murein sacculi, with the concomitant formation of a 1,6-anhydromuramoyl product. Lytic transglycosylases (LTs) play an integral role in the metabolism of the peptidoglycan (PG) sacculus. Their lytic action creates space within the PG sacculus to allow for its expansion as well as for the insertion of various structures such as secretion systems and flagella. This Haemophilus influenzae (strain PittEE) protein is Membrane-bound lytic murein transglycosylase F.